A 450-amino-acid chain; its full sequence is MSTHVTFDYSKALSFIGEHEITYLRDAVKVTHHAIHEKTGAGNDFLGWVDLPLQYDKEEFARIQKCAEKIKNDSDILLVVGIGGSYLGARAAIEMLNHSFYNTLSKEQRKTPQVLFVGQNISSTYMKDLMDVLEGKDFSINVISKSGTTTEPALAFRIFRKLLEEKYGKEEARKRIYATTDKARGALKTLADNEGYETFVIPDDVGGRFSVLTPVGLLPIAVSGLNIEEMMKGAAAGREDFGTSELEENPAYQYAVVRNALYNKGKTIEMLVNYEPALQYFAEWWKQLFGESEGKDQKGIFPSSANFSTDLHSLGQYVQEGRRDLFETVLKVGKPTHELTIESEENDLDGLNYLAGETVDFVNTKAYEGTLLAHSDGGVPNLIVNIPELNEYTFGYLVYFFEKACAMSGYLLGVNPFDQPGVEAYKKNMFALLGKPGFEELKAELEERLK.

Threonine 39 carries the phosphothreonine modification. Glutamate 291 acts as the Proton donor in catalysis. Residues histidine 312 and lysine 426 contribute to the active site.

It belongs to the GPI family.

The protein resides in the cytoplasm. The enzyme catalyses alpha-D-glucose 6-phosphate = beta-D-fructose 6-phosphate. The protein operates within carbohydrate biosynthesis; gluconeogenesis. Its pathway is carbohydrate degradation; glycolysis; D-glyceraldehyde 3-phosphate and glycerone phosphate from D-glucose: step 2/4. In terms of biological role, catalyzes the reversible isomerization of glucose-6-phosphate to fructose-6-phosphate. The sequence is that of Glucose-6-phosphate isomerase from Bacillus cereus (strain AH187).